Reading from the N-terminus, the 170-residue chain is Adenine phosphoribosyltransferase (170 aa).

This sequence belongs to the purine/pyrimidine phosphoribosyltransferase family. Homodimer.

Its subcellular location is the cytoplasm. The enzyme catalyses AMP + diphosphate = 5-phospho-alpha-D-ribose 1-diphosphate + adenine. The protein operates within purine metabolism; AMP biosynthesis via salvage pathway; AMP from adenine: step 1/1. Functionally, catalyzes a salvage reaction resulting in the formation of AMP, that is energically less costly than de novo synthesis. The polypeptide is Adenine phosphoribosyltransferase (Bacillus subtilis (strain 168)).